The primary structure comprises 402 residues: MTRLLWLFAAITASLAQDEISQDKWKLARANNYLGLNLLKQLPSNDKTNVFLSPFSVSTAMGMAYAGARGDTLEQLTLNFGYAADELNEGKVLALFKEQLQSTNDLPHDYTLNIANAAVAQEGYGILPEYTDALTSSFGAEYIEADFQKRGQEAIQKINAWVSNRTHGKVQSLFDEPPDFSTRLILLNAIYYKGTWLYEFDKTKTKPRSFYNGGVEKVQVPMMRLKSTLNHTYNAILNADLVDLPYVGNDFSMTIILPREKTGLASLKSVLTSQTLNLALQNMYPKDMKLKLPKFKLDTKYTLKPPLEAMGITKIFSADADLSGISGSRNLYVFDVLHKAVLEVNEEGSEAAAVTGFVIQLRTAAFVTPPPLPKVYVDHPFIFLIRNSKTNTIMFLGEINAL.

The signal sequence occupies residues 1–16 (MTRLLWLFAAITASLA). N-linked (GlcNAc...) asparagine glycosylation is found at Asn-164 and Asn-230.

This sequence belongs to the serpin family. As to quaternary structure, interacts with host thrombin/F2. Interacts with host coagulation factor VII/F7 (activated). Interacts with host coagulation factor X/F10 (activated). Interacts with host coagulation factor XII/F12 (activated). Interacts with host coagulation factor IX/F9 (activated). Interacts with host plasmin/PLG. Interacts with host protein C/PROC (activated). Saliva (at protein level). Salivary gland. Midgut. Low-level expression in ovary.

It is found in the secreted. Serine protease inhibitor that modulates blood feeding of ticks on vertebrate species. Inhibits the intrinsic and common pathways of blood coagulation in the host. Inhibits host thrombin, factor VIIa, factor Xa, factor XIa, factor XIIa, plasmin and activated protein C. Inhibits host trypsin and kallikrein. Reduces host complement activity. Does not affect proliferation of CD4+ T-cells and neutrophil migration. The chain is Iripin-8 from Ixodes ricinus (Common tick).